The chain runs to 143 residues: Transcriptional regulator MraZ (143 aa).

SpoVT-AbrB domains are found at residues 5–47 (EFEH…PLSE) and 76–119 (AVQC…NKAR).

The protein belongs to the MraZ family. Forms oligomers.

The protein resides in the cytoplasm. The protein localises to the nucleoid. The polypeptide is Transcriptional regulator MraZ (Pediococcus pentosaceus (strain ATCC 25745 / CCUG 21536 / LMG 10740 / 183-1w)).